A 308-amino-acid polypeptide reads, in one-letter code: Probable lipid phosphate phosphatase 4 (308 aa).

6 helical membrane passes run 26 to 46 (WLIL…EPFH), 66 to 86 (IPMW…FIVY), 93 to 113 (VYDL…TGVT), 162 to 182 (SFPS…AWYL), 193 to 213 (GHVA…LIGI), and 226 to 246 (VFAG…HFFP). The interval 274–308 (MTRTGSRGMLGNDVEPGNSASSPHDRHRESTDSDF) is disordered. Basic and acidic residues predominate over residues 296 to 308 (PHDRHRESTDSDF).

The protein belongs to the PA-phosphatase related phosphoesterase family.

The protein localises to the membrane. This chain is Probable lipid phosphate phosphatase 4 (LPP4), found in Arabidopsis thaliana (Mouse-ear cress).